A 422-amino-acid polypeptide reads, in one-letter code: MATLKCIDWQFSGSEAAKDAAAASLGSYTSALYALCDPHGKPILPPRNEILETSNTAEKAVVKAVLYGSGNAYAPSLGLAAAKSAVAEYLNQGLPKKLTADDVFMTLGCKQAIELAVDILAKPKANVLLPSPGFPWDLVRSIYKNLEVRHYNFLPEKNFEIDFDSVRALVDENTFAIFIINPHNPNGNTYSEAHLKQLAELAKELKIMVVSDEVFRWTLFGSNPFVPMGKFSSIVPVVTLGSISKGWKVPGWRTGWLTLHDLDGVFRNTKVLQAAQDFLQINNNPPTVIQAAIPDILEKTPQEFFDKRQSFLKDKVEFGYSKLKYIPSLTCYMKPEACTFLWTELDLSSFVDIEDDQDFCNKLAKEENLVVLPGIAFSQKNWLRHSIDMETPVLEDALERLKSFCDRHSNKKAPLKDVNGVK.

The protein belongs to the class-I pyridoxal-phosphate-dependent aminotransferase family. In terms of assembly, homodimer. Pyridoxal 5'-phosphate is required as a cofactor. In terms of tissue distribution, expressed in cotyledons, sepals, pistils, flower buds, phloem companion cells and vascular tissues of petiole, leaf, filament and fruit.

It catalyses the reaction L-cystine + H2O = S-sulfanyl-L-cysteine + pyruvate + NH4(+). Functionally, possesses cystine lyase activity in vitro. Does not possess tyrosine aminotransferase, alanine aminotransferase, aspartate aminotransferase and tryptophan aminotransferase activities. The polypeptide is Cystine lyase CORI3 (Arabidopsis thaliana (Mouse-ear cress)).